The sequence spans 394 residues: Probable purine permease 23 (394 aa).

Residues 1–20 are compositionally biased toward basic and acidic residues; that stretch reads MEMTEASKHTTTHEESEHVQ. The segment at 1–24 is disordered; the sequence is MEMTEASKHTTTHEESEHVQNPEP. Ser29 is modified (phosphoserine). The next 10 helical transmembrane spans lie at 43–63, 85–105, 124–144, 152–172, 180–200, 211–231, 254–274, 301–321, 328–348, and 352–372; these read ISVL…ILLL, WMQA…FFIF, LILL…LYAL, GFFM…TAII, WIII…PVFS, GIQA…LCLV, VLEM…VGLF, VGLA…VLYV, IVHM…FDFI, and FSWP…SYFY.

This sequence belongs to the purine permeases (TC 2.A.7.14) family.

It is found in the membrane. The chain is Probable purine permease 23 (PUP23) from Arabidopsis thaliana (Mouse-ear cress).